The sequence spans 511 residues: Lysine--tRNA ligase (511 aa).

Mg(2+) contacts are provided by Glu-421 and Glu-428.

It belongs to the class-II aminoacyl-tRNA synthetase family. Homodimer. Mg(2+) is required as a cofactor.

It is found in the cytoplasm. The enzyme catalyses tRNA(Lys) + L-lysine + ATP = L-lysyl-tRNA(Lys) + AMP + diphosphate. In Janthinobacterium sp. (strain Marseille) (Minibacterium massiliensis), this protein is Lysine--tRNA ligase.